Consider the following 348-residue polypeptide: Rhodopsin (348 aa).

Met1 bears the N-acetylmethionine mark. Over 1-36 (MNGTEGPDFYIPMSNQTGVVRSPFEYPQYYLAEPWQ) the chain is Extracellular. Residues Asn2 and Asn15 are each glycosylated (N-linked (GlcNAc...) asparagine). The helical transmembrane segment at 37 to 61 (FSMLAAYMFLLIVLGFPINFLTLYV) threads the bilayer. At 62–73 (TVQHKKLRTPLN) the chain is on the cytoplasmic side. Residues 74-96 (YILLNLAVADLFMVLGGFTTTLY) traverse the membrane as a helical segment. At 97-110 (TSLHGYFVFGPTGC) the chain is on the extracellular side. A disulfide bridge connects residues Cys110 and Cys187. Residues 111–133 (NVEGFFATLGGEIALWSLVVLAI) traverse the membrane as a helical segment. A 'Ionic lock' involved in activated form stabilization motif is present at residues 134–136 (ERY). The Cytoplasmic segment spans residues 134 to 152 (ERYVVVCKPMSNFRFGENH). The helical transmembrane segment at 153-173 (AIMGVAFTWIMALACAAPPLV) threads the bilayer. Residues 174–202 (GWSRYIPEGMQCSCGIDYYTLKPEVNNES) are Extracellular-facing. Glu201 is a Zn(2+) binding site. The helical transmembrane segment at 203 to 224 (FVIYMFVVHFTIPLIIIFFCYG) threads the bilayer. Over 225-252 (QLVFTVKEAAAQQQESATTQKAEKEVTR) the chain is Cytoplasmic. Residues 253-274 (MVIIMVIAFLICWVPYASVAFY) traverse the membrane as a helical segment. Residues 275 to 286 (IFTHQGSNFGPI) are Extracellular-facing. Zn(2+) is bound at residue Gln279. Residues 287–308 (FMTIPAFFAKSSSIYNPVIYIM) form a helical membrane-spanning segment. Lys296 carries the N6-(retinylidene)lysine modification. Residues 309-348 (MNKQFRNCMLTTICCGKNPLGDDEASATASKTETSQVAPA) are Cytoplasmic-facing. 2 S-palmitoyl cysteine lipidation sites follow: Cys322 and Cys323. Positions 330–348 (DDEASATASKTETSQVAPA) are interaction with SAG. Ser334 bears the Phosphoserine mark. Phosphothreonine is present on Thr336. Ser338 bears the Phosphoserine mark. Residues Thr340 and Thr342 each carry the phosphothreonine modification. Ser343 is modified (phosphoserine).

This sequence belongs to the G-protein coupled receptor 1 family. Opsin subfamily. In terms of assembly, homodimer. May form a complex composed of RHO, GRK1 and RCVRN in a Ca(2+)-dependent manner; RCVRN prevents the interaction between GRK1 and RHO. Interacts with GRK1. Interacts (phosphorylated form) with SAG. Interacts with GNAT1. Interacts with GNAT3. SAG and G-proteins compete for a common binding site. Interacts with PRCD; the interaction promotes PRCD stability. Forms a complex with ASAP1 and ARF4. Forms a complex with ASAP1, RAB11A, Rabin8/RAB3IP, ARF4 and RAB11FIP3; the complex regulates Golgi-to-cilia rhodopsin/RHO transport in photoreceptors. Phosphorylated on some or all of the serine and threonine residues present in the C-terminal region. In terms of processing, contains one covalently linked retinal chromophore. Upon light absorption, the covalently bound 11-cis-retinal is converted to all-trans-retinal. After hydrolysis of the Schiff base and release of the covalently bound all-trans-retinal, active rhodopsin is regenerated by binding of a fresh molecule of 11-cis-retinal.

The protein localises to the membrane. Its subcellular location is the cell projection. It localises to the cilium. The protein resides in the photoreceptor outer segment. Functionally, photoreceptor required for image-forming vision at low light intensity. Required for photoreceptor cell viability after birth. Light-induced isomerization of 11-cis to all-trans retinal triggers a conformational change that activates signaling via G-proteins. Subsequent receptor phosphorylation mediates displacement of the bound G-protein alpha subunit by the arrestin SAG and terminates signaling. This chain is Rhodopsin (RHO), found in Oryctolagus cuniculus (Rabbit).